The following is a 338-amino-acid chain: Inositol 2-dehydrogenase 4 (338 aa).

Belongs to the Gfo/Idh/MocA family. In terms of assembly, homotetramer.

It catalyses the reaction myo-inositol + NAD(+) = scyllo-inosose + NADH + H(+). In terms of biological role, involved in the oxidation of myo-inositol (MI) to 2-keto-myo-inositol (2KMI or 2-inosose). The protein is Inositol 2-dehydrogenase 4 of Saccharopolyspora erythraea (strain ATCC 11635 / DSM 40517 / JCM 4748 / NBRC 13426 / NCIMB 8594 / NRRL 2338).